The primary structure comprises 25 residues: Kappa-conotoxin RIIIJ (25 aa).

P2, P3, P7, P8, P13, P15, and P21 each carry 4-hydroxyproline. Disulfide bonds link C4–C17, C5–C22, and C12–C23.

It belongs to the conotoxin M superfamily. As to expression, expressed by the venom duct.

Its subcellular location is the secreted. In terms of biological role, kappa-conotoxins inhibits voltage-gated potassium channels. This toxin dose-dependently and reversibly inhibits the Kv1.2/KCNA2 channel in mammalia. Does not exert protective effect on cardiac tissue when administered after an ischemic event. This is Kappa-conotoxin RIIIJ from Conus radiatus (Rayed cone).